A 499-amino-acid chain; its full sequence is Bifunctional purine biosynthesis protein PurH (499 aa).

Residues 1–144 (MIKRALISVF…KNFKDVVVLT (144 aa)) enclose the MGS-like domain.

The protein belongs to the PurH family.

The enzyme catalyses (6R)-10-formyltetrahydrofolate + 5-amino-1-(5-phospho-beta-D-ribosyl)imidazole-4-carboxamide = 5-formamido-1-(5-phospho-D-ribosyl)imidazole-4-carboxamide + (6S)-5,6,7,8-tetrahydrofolate. It catalyses the reaction IMP + H2O = 5-formamido-1-(5-phospho-D-ribosyl)imidazole-4-carboxamide. It participates in purine metabolism; IMP biosynthesis via de novo pathway; 5-formamido-1-(5-phospho-D-ribosyl)imidazole-4-carboxamide from 5-amino-1-(5-phospho-D-ribosyl)imidazole-4-carboxamide (10-formyl THF route): step 1/1. It functions in the pathway purine metabolism; IMP biosynthesis via de novo pathway; IMP from 5-formamido-1-(5-phospho-D-ribosyl)imidazole-4-carboxamide: step 1/1. In Clostridium botulinum (strain Langeland / NCTC 10281 / Type F), this protein is Bifunctional purine biosynthesis protein PurH.